Reading from the N-terminus, the 433-residue chain is F-box only protein 15 (433 aa).

Positions 1-41 (MPSEILVKILSYLDAVTLVCIGCVSRRFYHLADDNLIWVRK) constitute an F-box domain.

In terms of assembly, directly interacts with SKP1 and CUL1. Expressed in testis.

Functionally, substrate-recognition component of the SCF (SKP1-CUL1-F-box protein)-type E3 ubiquitin ligase complex. This chain is F-box only protein 15 (Fbxo15), found in Mus musculus (Mouse).